The chain runs to 353 residues: ATP-dependent (S)-NAD(P)H-hydrate dehydratase (353 aa).

The YjeF C-terminal domain maps to 18-345; that stretch reads MLARVRQMVP…DEVHTAFLNL (328 aa). The tract at residues 95-121 is disordered; sequence RSSPPALSSSDSGSSPSRTKSAPDTDP. Low complexity predominate over residues 96–114; that stretch reads SSPPALSSSDSGSSPSRTK. (6S)-NADPHX-binding positions include G143 and 196-202; that span reads NVVEFGR. Residues 241–245 and 260–269 each bind ATP; these read KGAKD and GGLKRSGGQG. D270 is a (6S)-NADPHX binding site.

The protein belongs to the NnrD/CARKD family. Requires Mg(2+) as cofactor.

The protein localises to the cytoplasm. The catalysed reaction is (6S)-NADHX + ATP = ADP + phosphate + NADH + H(+). It catalyses the reaction (6S)-NADPHX + ATP = ADP + phosphate + NADPH + H(+). Its function is as follows. Catalyzes the dehydration of the S-form of NAD(P)HX at the expense of ATP, which is converted to ADP. Together with NAD(P)HX epimerase, which catalyzes the epimerization of the S- and R-forms, the enzyme allows the repair of both epimers of NAD(P)HX, a damaged form of NAD(P)H that is a result of enzymatic or heat-dependent hydration. The sequence is that of ATP-dependent (S)-NAD(P)H-hydrate dehydratase from Neurospora crassa (strain ATCC 24698 / 74-OR23-1A / CBS 708.71 / DSM 1257 / FGSC 987).